We begin with the raw amino-acid sequence, 70 residues long: Brevinin-1Vb (70 aa).

A signal peptide spans 1 to 22 (MFTLKKSLLLLFFLGTINLSLC). Residues 23-44 (EEERNAEEERRDEPDEMNVEVE) constitute a propeptide that is removed on maturation. A disulfide bridge links Cys64 with Cys70.

As to expression, expressed by the skin glands.

The protein localises to the secreted. Antimicrobial peptide. The sequence is that of Brevinin-1Vb from Odorrana versabilis (Chinese bamboo leaf odorous frog).